The primary structure comprises 175 residues: Protein LHCP TRANSLOCATION DEFECT (175 aa).

A chloroplast-targeting transit peptide spans 1-68; the sequence is MASSSISFSC…WFKFGKNGVD (68 aa). An ANK repeat occupies 117–149; the sequence is PVDILLMLAATEGDRPKIEELLKAGADYSVKDA.

In terms of assembly, interacts with CAO/cpSRP43, but is not a component of the transit complex. Interacts with LHCP (via T14 domain), TIC40 and TIC110. In terms of tissue distribution, highly expressed in leaves and seedlings. Detected in roots, but not in germinating seeds.

Its subcellular location is the plastid. The protein resides in the chloroplast thylakoid membrane. It localises to the chloroplast envelope. It is found in the chloroplast stroma. In terms of biological role, involved in the import of light-harvesting complex proteins (LHCP) and subsequent routing of these proteins to the chloroplast signal recognition particle (SRP) pathway. This chain is Protein LHCP TRANSLOCATION DEFECT (LTD), found in Arabidopsis thaliana (Mouse-ear cress).